The sequence spans 510 residues: GMP synthase [glutamine-hydrolyzing] (510 aa).

The 191-residue stretch at 5–195 folds into the Glutamine amidotransferase type-1 domain; sequence LVLVVDFGGQ…LFNVCNLKGD (191 aa). Cys-82 functions as the Nucleophile in the catalytic mechanism. Residues His-169 and Glu-171 contribute to the active site. The 190-residue stretch at 196–385 folds into the GMPS ATP-PPase domain; the sequence is WSMSSFAEQQ…LGIPHKLVWR (190 aa). 223 to 229 serves as a coordination point for ATP; it reads SGGVDSS.

Homodimer.

It catalyses the reaction XMP + L-glutamine + ATP + H2O = GMP + L-glutamate + AMP + diphosphate + 2 H(+). It participates in purine metabolism; GMP biosynthesis; GMP from XMP (L-Gln route): step 1/1. Its function is as follows. Catalyzes the synthesis of GMP from XMP. This Clostridium botulinum (strain Okra / Type B1) protein is GMP synthase [glutamine-hydrolyzing].